The sequence spans 267 residues: Imidazole glycerol phosphate synthase subunit HisF (267 aa).

Catalysis depends on residues Asp22 and Asp141.

This sequence belongs to the HisA/HisF family. In terms of assembly, heterodimer of HisH and HisF.

Its subcellular location is the cytoplasm. It carries out the reaction 5-[(5-phospho-1-deoxy-D-ribulos-1-ylimino)methylamino]-1-(5-phospho-beta-D-ribosyl)imidazole-4-carboxamide + L-glutamine = D-erythro-1-(imidazol-4-yl)glycerol 3-phosphate + 5-amino-1-(5-phospho-beta-D-ribosyl)imidazole-4-carboxamide + L-glutamate + H(+). It functions in the pathway amino-acid biosynthesis; L-histidine biosynthesis; L-histidine from 5-phospho-alpha-D-ribose 1-diphosphate: step 5/9. Functionally, IGPS catalyzes the conversion of PRFAR and glutamine to IGP, AICAR and glutamate. The HisF subunit catalyzes the cyclization activity that produces IGP and AICAR from PRFAR using the ammonia provided by the HisH subunit. The polypeptide is Imidazole glycerol phosphate synthase subunit HisF (Mycobacterium tuberculosis (strain ATCC 25177 / H37Ra)).